We begin with the raw amino-acid sequence, 172 residues long: Protein PLASTID REDOX INSENSITIVE 2, chloroplastic (172 aa).

The N-terminal 54 residues, 1–54 (MAARLWAAAVAPATLNPPLLTLSASSSPSSSRLRRSVLGRLRSRAPRPADFVCR), are a transit peptide targeting the chloroplast.

It is found in the plastid. It localises to the chloroplast stroma. The protein resides in the chloroplast nucleoid. In terms of biological role, required for the activity of the plastid-encoded RNA polymerase (PEP) and full expression of genes transcribed by PEP. The polypeptide is Protein PLASTID REDOX INSENSITIVE 2, chloroplastic (Oryza sativa subsp. japonica (Rice)).